The primary structure comprises 38 residues: Photosystem II reaction center protein M (38 aa).

The helical transmembrane segment at 7-27 (GFVASILFVLVPSVFLIILYI) threads the bilayer.

This sequence belongs to the PsbM family. As to quaternary structure, PSII is composed of 1 copy each of membrane proteins PsbA, PsbB, PsbC, PsbD, PsbE, PsbF, PsbH, PsbI, PsbJ, PsbK, PsbL, PsbM, PsbT, PsbX, PsbY, PsbZ, Psb30/Ycf12, peripheral proteins PsbO, CyanoQ (PsbQ), PsbU, PsbV and a large number of cofactors. It forms dimeric complexes.

Its subcellular location is the cellular thylakoid membrane. In terms of biological role, one of the components of the core complex of photosystem II (PSII). PSII is a light-driven water:plastoquinone oxidoreductase that uses light energy to abstract electrons from H(2)O, generating O(2) and a proton gradient subsequently used for ATP formation. It consists of a core antenna complex that captures photons, and an electron transfer chain that converts photonic excitation into a charge separation. This subunit is found at the monomer-monomer interface. This Nostoc sp. (strain PCC 7120 / SAG 25.82 / UTEX 2576) protein is Photosystem II reaction center protein M.